A 396-amino-acid chain; its full sequence is Phosphoglycerate kinase (396 aa).

Substrate-binding positions include 21–23 (DFN), Arg-37, 60–63 (HLGR), Arg-121, and Arg-154. ATP contacts are provided by residues Lys-205, Gly-296, Glu-327, and 353 to 356 (GGDS).

The protein belongs to the phosphoglycerate kinase family. Monomer.

The protein localises to the cytoplasm. It catalyses the reaction (2R)-3-phosphoglycerate + ATP = (2R)-3-phospho-glyceroyl phosphate + ADP. It functions in the pathway carbohydrate degradation; glycolysis; pyruvate from D-glyceraldehyde 3-phosphate: step 2/5. The sequence is that of Phosphoglycerate kinase from Anaeromyxobacter sp. (strain K).